Here is a 387-residue protein sequence, read N- to C-terminus: MPVENEFPRELPNHSLISSKSQMTLQSIWLFRYPVSSIVCVQFPTDFPKPVLALSARIAIDLGLFTHIVQKCPITSRSLAAITGAEELLITRILRLLSTAHFAEETSTGTWAPTPITKTMAKEEIAAGYRFICHMVVPALQSAPGYFQHHGYSCPTDAKDGLVQHALQTKKTSFEYIMSDPHLLKDFNLFMGNGMGARKSWLDWYPVQSNILDGADADPDKALIVDVGGGKGHDLIAFHKRYPNAGRLVLEDLPAAFDDLGQYSMVIEKVPHDFLAEAQPVKGAKAYLCHHILHDWPDNYCVRILEGISSAMTPGYSKLLLHEGIVPEKGVCQFQAMSDIATMACNGGMERTREQWRTLLHMAGLQLIRFWNSPDEGGDGIIEAAKV.

An S-adenosyl-L-methionine-binding site is contributed by Asp252. Catalysis depends on His294, which acts as the Proton acceptor.

This sequence belongs to the class I-like SAM-binding methyltransferase superfamily. Cation-independent O-methyltransferase family.

It participates in secondary metabolite biosynthesis. It functions in the pathway alkaloid biosynthesis. Its pathway is mycotoxin biosynthesis. O-methyltransferase; part of the gene cluster that mediates the biosynthesis of the aspoquinolone mycotoxins. The role of asqD within the aspoquinolone pathway has still to be determined. The first step of the pathway is catalyzed by the nonribosomal peptide synthetase asqK that condenses anthranilic acid and O-methyl-L-tyrosine to produce 4'-methoxycyclopeptin. 4'-methoxycyclopeptin is then converted to 4'-methoxydehydrocyclopeptin by the ketoglutarate-dependent dioxygenase asqJ. AsqJ also converts its first product 4'-methoxydehydrocyclopeptin to 4'-methoxycyclopenin. The following conversion of 4'-methoxycyclopenin into 4'-methoxyviridicatin is catalyzed by the cyclopenase asqI. 4'-methoxyviridicatin is the precursor of quinolone natural products, and is further converted to quinolinone B. The prenyltransferase asqH1 then catalyzes the canonical Friedel-Crafts alkylation of quinolinone B with dimethylallyl cation to yield dimethylallyl quinolone, which is subjected to FAD-dependent dehydrogenation by the FAD-linked oxidoreductase asqF to yield conjugated aryl diene. The delta(3') double bond then serves as the site of the second alkylation with DMAPP catalyzed by the prenyltransferase asqH2 to yield a carbenium ion intermediate, which can be attacked by H(2)O to yield a styrenyl quinolone containing a C3'-hydroxyprenyl chain. The FAD-dependent monooxygenase asqG performs epoxidation of the terminal C7'-C8' olefin. Finally, after dehydratation of the epoxide at C3 by asqC, the quinolone epoxide rearrangement protein asqO catalyzes an enzymatic 3-exo-tet cyclization to yield the cyclopropyl-THF ring system in aspoquinolone. This chain is O-methyltransferase asqD, found in Emericella nidulans (strain FGSC A4 / ATCC 38163 / CBS 112.46 / NRRL 194 / M139) (Aspergillus nidulans).